We begin with the raw amino-acid sequence, 189 residues long: Interferon alpha-6 (189 aa).

The signal sequence occupies residues 1 to 20 (MALPFALLMALVVLSCKSSC). 2 disulfide bridges follow: Cys-24–Cys-122 and Cys-52–Cys-162.

The protein belongs to the alpha/beta interferon family.

The protein resides in the secreted. In terms of biological role, produced by macrophages, IFN-alpha have antiviral activities. Interferon stimulates the production of two enzymes: a protein kinase and an oligoadenylate synthetase. The sequence is that of Interferon alpha-6 (IFNA6) from Homo sapiens (Human).